Consider the following 367-residue polypeptide: MSVLRAVLVQDMARALLLAAAAFVLTLIIGGWWVRFARRHKLGKRIRPDGPQSHLVKVGTPTMGGIMIVSTVLILTILFNLVDRWSMLLPLGVMVSFAVLGAIDDWLSLTGSRSKTHGFTVRFKFWIMMAVAFVASLALYLPQPYGLEHEGLVQIPFVGEVNIGLWFIPIAVLIIVFISNAVNITDGLDSLAGWNLTLAFGAYGVITFLAEPRLTNLMAFCFTVVGACAAFLWYNAYPAQVFMGDLGALALGATLAVVALQSQQWLLLPVIGIVFVVEALSTMIQTGYFKWTKWRYGEGRRIFKMAPLHHHFELLGWSQPQVTQRFVLIGTVAAMVGISLALIFGPPATGLQVDQPGIIVIEGDGSR.

10 helical membrane-spanning segments follow: residues 16–36 (LLLA…WVRF), 62–82 (TMGG…FNLV), 87–107 (MLLP…DDWL), 125–145 (FWIM…PQPY), 158–178 (VGEV…IVFI), 190–210 (SLAG…TFLA), 214–234 (LTNL…FLWY), 240–260 (QVFM…VVAL), 264–284 (QWLL…STMI), and 326–346 (FVLI…IFGP).

It belongs to the glycosyltransferase 4 family. MraY subfamily. It depends on Mg(2+) as a cofactor.

The protein resides in the cell membrane. It carries out the reaction UDP-N-acetyl-alpha-D-muramoyl-L-alanyl-gamma-D-glutamyl-meso-2,6-diaminopimeloyl-D-alanyl-D-alanine + di-trans,octa-cis-undecaprenyl phosphate = di-trans,octa-cis-undecaprenyl diphospho-N-acetyl-alpha-D-muramoyl-L-alanyl-D-glutamyl-meso-2,6-diaminopimeloyl-D-alanyl-D-alanine + UMP. It participates in cell wall biogenesis; peptidoglycan biosynthesis. Its function is as follows. Catalyzes the initial step of the lipid cycle reactions in the biosynthesis of the cell wall peptidoglycan: transfers peptidoglycan precursor phospho-MurNAc-pentapeptide from UDP-MurNAc-pentapeptide onto the lipid carrier undecaprenyl phosphate, yielding undecaprenyl-pyrophosphoryl-MurNAc-pentapeptide, known as lipid I. This is Phospho-N-acetylmuramoyl-pentapeptide-transferase from Chloroflexus aurantiacus (strain ATCC 29366 / DSM 635 / J-10-fl).